We begin with the raw amino-acid sequence, 92 residues long: Small ribosomal subunit protein uS19c (92 aa).

This sequence belongs to the universal ribosomal protein uS19 family.

The protein resides in the plastid. Its subcellular location is the chloroplast. Its function is as follows. Protein S19 forms a complex with S13 that binds strongly to the 16S ribosomal RNA. The chain is Small ribosomal subunit protein uS19c from Chara vulgaris (Common stonewort).